A 491-amino-acid chain; its full sequence is MANYFNTLNLRQQLAQLGKCRFMGRDEFADGASYLQGKKVVIVGCGAQGLNQGLNMRDSGLDISYALRKEAIAEKRASWRKATENGFKVGTYEELIPQADLVINLTPDKQHSDVVRTVQPLMKDGAALGYSHGFNIVEVGEQIRKDITVVMVAPKCPGTEVREEYKRGFGVPTLIAVHPENDPKGEGMAIAKAWAAATGGHRAGVLESSFVAEVKSDLMGEQTILCGMLQAGSLLCFDKLVEEGTDPAYAEKLIQFGWETITEALKQGGITLMMDRLSNPAKLRAYALSEQLKEIMAPLFQKHMDDIISGEFSSGMMADWANDDKKLLTWREETGKTAFETAPQYEGKIGEQEYFDKGVLMIAMVKAGVELAFETMVDSGIIEESAYYESLHELPLIANTIARKRLYEMNVVISDTAEYGNYLFSYACVPLLKPFMAELQPGDLGKAIPEGAVDNGQLRDVNEAIRSHAIEQVGKKLRGYMTDMKRIAVAG.

Residues 15-208 form the KARI N-terminal Rossmann domain; it reads AQLGKCRFMG…GGHRAGVLES (194 aa). NADP(+) is bound by residues 45-48, Arg-68, Arg-76, Ser-78, and 108-110; these read CGAQ and DKQ. Residue His-132 is part of the active site. Gly-158 lines the NADP(+) pocket. 2 consecutive KARI C-terminal knotted domains span residues 209 to 344 and 345 to 484; these read SFVA…TAPQ and YEGK…MTDM. Mg(2+) contacts are provided by Asp-217, Glu-221, Glu-389, and Glu-393. Substrate is bound at residue Ser-414.

This sequence belongs to the ketol-acid reductoisomerase family. It depends on Mg(2+) as a cofactor.

It catalyses the reaction (2R)-2,3-dihydroxy-3-methylbutanoate + NADP(+) = (2S)-2-acetolactate + NADPH + H(+). The enzyme catalyses (2R,3R)-2,3-dihydroxy-3-methylpentanoate + NADP(+) = (S)-2-ethyl-2-hydroxy-3-oxobutanoate + NADPH + H(+). The protein operates within amino-acid biosynthesis; L-isoleucine biosynthesis; L-isoleucine from 2-oxobutanoate: step 2/4. It functions in the pathway amino-acid biosynthesis; L-valine biosynthesis; L-valine from pyruvate: step 2/4. In terms of biological role, involved in the biosynthesis of branched-chain amino acids (BCAA). Catalyzes an alkyl-migration followed by a ketol-acid reduction of (S)-2-acetolactate (S2AL) to yield (R)-2,3-dihydroxy-isovalerate. In the isomerase reaction, S2AL is rearranged via a Mg-dependent methyl migration to produce 3-hydroxy-3-methyl-2-ketobutyrate (HMKB). In the reductase reaction, this 2-ketoacid undergoes a metal-dependent reduction by NADPH to yield (R)-2,3-dihydroxy-isovalerate. In Escherichia coli (strain ATCC 8739 / DSM 1576 / NBRC 3972 / NCIMB 8545 / WDCM 00012 / Crooks), this protein is Ketol-acid reductoisomerase (NADP(+)).